Reading from the N-terminus, the 1175-residue chain is Phospholipid-transporting ATPase IF (1175 aa).

Helical transmembrane passes span 69–89, 91–111, 287–307, and 338–358; these read FYFL…SPIT, GLPL…EDWL, NTFL…STIL, and FISD…ISLY. The 4-aspartylphosphate intermediate role is filled by Asp-407. ATP is bound by residues Asp-407, Lys-408, Thr-409, Glu-530, Phe-571, Lys-594, Arg-625, Thr-705, Gly-706, Asp-707, Arg-793, and Lys-799. Asp-407 serves as a coordination point for Mg(2+). Residue Thr-409 coordinates Mg(2+). Asp-820 contributes to the Mg(2+) binding site. 2 residues coordinate ATP: Asn-823 and Asp-824. Asp-824 serves as a coordination point for Mg(2+). 6 helical membrane passes run 862–882, 910–930, 963–983, 994–1014, 1033–1053, and 1060–1080; these read LLFV…QYFF, VYLT…YSLV, WTVL…FLVG, MFGN…TVTV, GSII…WPFL, and FVFI…LMVV.

It belongs to the cation transport ATPase (P-type) (TC 3.A.3) family. Type IV subfamily. In terms of assembly, component of a P4-ATPase flippase complex which consists of a catalytic alpha subunit ATP11B and an accessory beta subunit TMEM30A. The cofactor is Mg(2+). As to expression, expressed in retina, brain, liver, testes and kidney (at protein level).

The protein localises to the recycling endosome membrane. The protein resides in the early endosome. It localises to the endoplasmic reticulum. Its subcellular location is the golgi apparatus. It is found in the trans-Golgi network. It catalyses the reaction ATP + H2O + phospholipidSide 1 = ADP + phosphate + phospholipidSide 2.. It carries out the reaction a 1,2-diacyl-sn-glycero-3-phospho-L-serine(out) + ATP + H2O = a 1,2-diacyl-sn-glycero-3-phospho-L-serine(in) + ADP + phosphate + H(+). The catalysed reaction is a 1,2-diacyl-sn-glycero-3-phosphoethanolamine(out) + ATP + H2O = a 1,2-diacyl-sn-glycero-3-phosphoethanolamine(in) + ADP + phosphate + H(+). In terms of biological role, catalytic component of a P4-ATPase flippase complex which catalyzes the hydrolysis of ATP coupled to the transport of aminophospholipids, phosphatidylserines (PS) and phosphatidylethanolamines (PE), from the outer to the inner leaflet of intracellular membranes. May contribute to the maintenance of membrane lipid asymmetry in endosome compartment. The sequence is that of Phospholipid-transporting ATPase IF from Mus musculus (Mouse).